Consider the following 1151-residue polypeptide: ATP-dependent RNA helicase ddx46 (1151 aa).

2 stretches are compositionally biased toward basic and acidic residues: residues 1–26 (MDEYDKKRRLEHGGSDRSRSSNDNRN) and 35–51 (YRDDRKDDRYYRDDRSH). Disordered stretches follow at residues 1–138 (MDEY…SRFD), 166–224 (MYQQ…VFQQ), 287–358 (QELK…PLVN), and 424–449 (TSQMIDDDEKLEEESEGEDDGKDKTI). Over residues 52–73 (YNNNNNNNNNNNNNNNNNNGNG) the composition is skewed to low complexity. Over residues 81-90 (SSQNKYQNHH) the composition is skewed to polar residues. Low complexity-rich tracts occupy residues 91 to 124 (QQSPPQQQQQQQNSSYVPSQPPQQQTQTQQQPHI), 166 to 199 (MYQQPMYQQKQQQPQPPIFQQQQKQQQPPIFQHH), 207 to 224 (QPPVYQQQQQQQQPVFQQ), and 291 to 339 (ASGS…TTSP). Residues 428–443 (IDDDEKLEEESEGEDD) are compositionally biased toward acidic residues. A Q motif motif is present at residues 509–537 (QSWAQAGLTEKVHLLLKKFQYEKPTSIQA). In terms of domain architecture, Helicase ATP-binding spans 540-718 (IPAIMNGRDL…KKILNKPLEI (179 aa)). Residue 553–560 (ARTGSGKT) coordinates ATP. A DEAD box motif is present at residues 666–669 (DEAD). The region spanning 729–890 (DIEQFVEVRP…KVPDELRKLN (162 aa)) is the Helicase C-terminal domain. The interval 904–972 (LLAPTGFTGR…EKEKQLLSEK (69 aa)) is disordered. The span at 915-930 (HKFDAAEEDKKNIERK) shows a compositional bias: basic and acidic residues. The segment covering 938 to 948 (IEEEEEEEDED) has biased composition (acidic residues). Residues 949–972 (KEKAEKEKLAAASAEKEKQLLSEK) show a composition bias toward basic and acidic residues.

The protein belongs to the DEAD box helicase family. DDX46/PRP5 subfamily. In terms of assembly, component of the 17S U2 SnRNP complex, a ribonucleoprotein complex that contains small nuclear RNA (snRNA) U2 and a number of specific proteins.

The protein resides in the nucleus speckle. It carries out the reaction ATP + H2O = ADP + phosphate + H(+). Functionally, component of the 17S U2 SnRNP complex of the spliceosome, a large ribonucleoprotein complex that removes introns from transcribed pre-mRNAs. This Dictyostelium discoideum (Social amoeba) protein is ATP-dependent RNA helicase ddx46 (helB1).